Reading from the N-terminus, the 134-residue chain is Small ribosomal subunit protein uS11 (134 aa).

The protein belongs to the universal ribosomal protein uS11 family. As to quaternary structure, component of the small ribosomal subunit.

It is found in the cytoplasm. This is Small ribosomal subunit protein uS11 (RPS14) from Encephalitozoon cuniculi (strain GB-M1) (Microsporidian parasite).